The following is a 452-amino-acid chain: Exodeoxyribonuclease 7 large subunit (452 aa).

This sequence belongs to the XseA family. Heterooligomer composed of large and small subunits.

The protein localises to the cytoplasm. It carries out the reaction Exonucleolytic cleavage in either 5'- to 3'- or 3'- to 5'-direction to yield nucleoside 5'-phosphates.. Functionally, bidirectionally degrades single-stranded DNA into large acid-insoluble oligonucleotides, which are then degraded further into small acid-soluble oligonucleotides. The chain is Exodeoxyribonuclease 7 large subunit from Bacillus mycoides (strain KBAB4) (Bacillus weihenstephanensis).